The following is a 740-amino-acid chain: DNA (cytosine-5)-methyltransferase 3C (740 aa).

Disordered regions lie at residues 75-99 (LTGDGDEDRDGEVGGSSGSGTPVMP) and 248-312 (FKPT…DVTN). The 133-residue stretch at 309 to 441 (DVTNNKGNLE…LQDFFTTDPD (133 aa)) folds into the ADD domain. The GATA-type; atypical zinc-finger motif lies at 320–350 (HCLSCGRKDPVSFHPLFEGGLCQSCRDRFLE). The PHD-type; atypical zinc-finger motif lies at 361 to 417 (QSYCTVCCEGRELLLCSNTSCCRCFCVECLEVLVGAGTAEDVKLQEPWSCYMCLPQR). One can recognise an SAM-dependent MTase C5-type domain in the interval 462–740 (IRVLSLFDGI…APLKDHFACE (279 aa)). Positions 471, 473, 492, 514, and 515 each coordinate S-adenosyl-L-methionine. Cysteine 538 is a catalytic residue. S-adenosyl-L-methionine is bound by residues arginine 719 and tryptophan 721.

The protein belongs to the class I-like SAM-binding methyltransferase superfamily. C5-methyltransferase family. In terms of assembly, homodimer. Interacts with DNMT3L. Interacts with SPOCD1; recruiting Dnmt3C to transposons. In terms of tissue distribution, specifically expressed in testis.

The protein resides in the nucleus. It carries out the reaction a 2'-deoxycytidine in DNA + S-adenosyl-L-methionine = a 5-methyl-2'-deoxycytidine in DNA + S-adenosyl-L-homocysteine + H(+). In terms of biological role, DNA methyltransferase that specifically methylates the promoters of evolutionarily young retrotransposons in the male germline. De novo methylation and subsequent repression of transposable elements prevents their mobilization, which is essential for germline integrity. Compared to Dnmt3a and Dnmt3b, shows lower DNA methyltransferase efficiency. In Mus musculus (Mouse), this protein is DNA (cytosine-5)-methyltransferase 3C.